The sequence spans 249 residues: 2,3-bisphosphoglycerate-dependent phosphoglycerate mutase (249 aa).

Substrate is bound by residues 9-16 (RHGQSQWN), 22-23 (TG), arginine 61, 88-91 (ERHY), lysine 99, 115-116 (RR), and 184-185 (GN). The Tele-phosphohistidine intermediate role is filled by histidine 10. Glutamate 88 functions as the Proton donor/acceptor in the catalytic mechanism.

Belongs to the phosphoglycerate mutase family. BPG-dependent PGAM subfamily. In terms of assembly, homodimer.

It carries out the reaction (2R)-2-phosphoglycerate = (2R)-3-phosphoglycerate. Its pathway is carbohydrate degradation; glycolysis; pyruvate from D-glyceraldehyde 3-phosphate: step 3/5. Its function is as follows. Catalyzes the interconversion of 2-phosphoglycerate and 3-phosphoglycerate. This chain is 2,3-bisphosphoglycerate-dependent phosphoglycerate mutase, found in Xanthomonas oryzae pv. oryzae (strain MAFF 311018).